Reading from the N-terminus, the 216-residue chain is MSIALKQVFNKDKTFRPKRKFEPGTQRFELHKRAQASLNSGVDLRAAVQLPNGEDQNDWVAVHVVDFFNRINLIYGTICEFCTERTCPVMSGGPKYEYRWQDDLKYKKPTALPAPQYMNLLMDWIEVQINNEDIFPTCVGVPFPKNFLQICKKILCRLFRVFVHVYIHHFDRVIVMGAEAHVNTCYKHFYYFVTEMNLIDRKELEPLKEMTTRMCH.

The Zn(2+) site is built by Cys82, Cys87, His164, and His169.

Functionally, modulates LATS1 expression in the Hippo signaling pathway which plays a pivotal role in organ size control and tumor suppression by restricting proliferation and promoting apoptosis. This is MOB kinase activator 3B (Mob3b) from Mus musculus (Mouse).